An 888-amino-acid polypeptide reads, in one-letter code: DNA mismatch repair protein MutS (888 aa).

The tract at residues 249–271 (IGQRPPLSPPSREASGSTMAIDP) is disordered. Position 638–645 (638–645 (GPNMAGKS)) interacts with ATP.

This sequence belongs to the DNA mismatch repair MutS family.

In terms of biological role, this protein is involved in the repair of mismatches in DNA. It is possible that it carries out the mismatch recognition step. This protein has a weak ATPase activity. The sequence is that of DNA mismatch repair protein MutS from Nitrobacter winogradskyi (strain ATCC 25391 / DSM 10237 / CIP 104748 / NCIMB 11846 / Nb-255).